The sequence spans 650 residues: Leukocyte immunoglobulin-like receptor subfamily B member 1 (650 aa).

An N-terminal signal peptide occupies residues 1 to 23 (MTPILTVLICLGLSLGPRTHVQA). At 24 to 461 (GHLPKPTLWA…QSGLGRHLGV (438 aa)) the chain is on the extracellular side. Ig-like C2-type domains lie at 27-115 (PKPT…DPLE), 116-221 (LVVT…LVLG), 222-312 (VSKK…APSD), and 313-409 (PLDI…YLLT). Intrachain disulfides connect cysteine 49-cysteine 98, cysteine 145-cysteine 197, cysteine 157-cysteine 167, and cysteine 246-cysteine 297. N-linked (GlcNAc...) asparagine glycans are attached at residues asparagine 281, asparagine 302, and asparagine 341. An intrachain disulfide couples cysteine 346 to cysteine 397. A disordered region spans residues 415 to 451 (LELVVSGPSGGPSSPTTGPTSTSGPEDQPLTPTGSDP). The segment covering 425 to 439 (GPSSPTTGPTSTSGP) has biased composition (low complexity). A helical membrane pass occupies residues 462-482 (VIGILVAVILLLLLLLLLFLI). The Cytoplasmic segment spans residues 483–650 (LRHRRQGKHW…PSIYATLAIH (168 aa)). The disordered stretch occupies residues 491 to 524 (HWTSTQRKADFQHPAGAVGPEPTDRGLQWRSSPA). 2 consecutive short sequence motifs (ITIM motif) follow at residues 531–536 (NLYAAV) and 560–565 (VTYAEV). At tyrosine 533 the chain carries Phosphotyrosine. Residues 563-650 (AEVKHSRPRR…PSIYATLAIH (88 aa)) are disordered. Composition is skewed to basic and acidic residues over residues 564 to 574 (EVKHSRPRREM) and 586 to 600 (LDTK…RQMD). 2 consecutive short sequence motifs (ITIM motif) follow at residues 612–617 (VTYAQL) and 642–647 (SIYATL). Residues tyrosine 614 and tyrosine 644 each carry the phosphotyrosine modification.

Binds PTPN6 when phosphorylated. Binds FCER1A and FCGR1A. Interacts with human cytomegalovirus/HHV-5 protein UL18. Interacts with peptide-bound HLA-G-B2M complex. Interacts with peptide-bound HLA-F-B2M complex but not with peptide-free HLA-F open conformer. It does not probe the peptide sequence directly. In terms of processing, phosphorylated on tyrosine residues. Dephosphorylated by PTPN6. As to expression, expressed in B cells, monocytes and various dendritic cell (DC) subsets including myeloid, plasmacytoid and tolerogenic DCs (at protein level). Expressed in decidual macrophages (at protein level). Expressed in decidual NK cells (at protein level).

The protein resides in the cell membrane. The protein localises to the secreted. Functionally, receptor for class I MHC antigens. Recognizes a broad spectrum of HLA-A, HLA-B, HLA-C, HLA-G and HLA-F alleles. Receptor for H301/UL18, a human cytomegalovirus class I MHC homolog. Ligand binding results in inhibitory signals and down-regulation of the immune response. Engagement of LILRB1 present on natural killer cells or T-cells by class I MHC molecules protects the target cells from lysis. Interaction with HLA-B or HLA-E leads to inhibition of FCER1A signaling and serotonin release. Inhibits FCGR1A-mediated phosphorylation of cellular proteins and mobilization of intracellular calcium ions. Recognizes HLA-G in complex with B2M/beta-2 microglobulin and a nonamer self-peptide. Upon interaction with peptide-bound HLA-G-B2M complex, triggers secretion of growth-promoting factors by decidual NK cells. Reprograms B cells toward an immune suppressive phenotype. This is Leukocyte immunoglobulin-like receptor subfamily B member 1 from Homo sapiens (Human).